The sequence spans 320 residues: Bifunctional protein FolD 2 (320 aa).

NADP(+) contacts are provided by residues Gly-173–Ser-175 and Ile-242.

The protein belongs to the tetrahydrofolate dehydrogenase/cyclohydrolase family. As to quaternary structure, homodimer.

The enzyme catalyses (6R)-5,10-methylene-5,6,7,8-tetrahydrofolate + NADP(+) = (6R)-5,10-methenyltetrahydrofolate + NADPH. The catalysed reaction is (6R)-5,10-methenyltetrahydrofolate + H2O = (6R)-10-formyltetrahydrofolate + H(+). It participates in one-carbon metabolism; tetrahydrofolate interconversion. Functionally, catalyzes the oxidation of 5,10-methylenetetrahydrofolate to 5,10-methenyltetrahydrofolate and then the hydrolysis of 5,10-methenyltetrahydrofolate to 10-formyltetrahydrofolate. The polypeptide is Bifunctional protein FolD 2 (Rubrobacter xylanophilus (strain DSM 9941 / JCM 11954 / NBRC 16129 / PRD-1)).